Here is a 656-residue protein sequence, read N- to C-terminus: Rab proteins geranylgeranyltransferase component A 2 (656 aa).

Disordered stretches follow at residues 188 to 209 (MHTV…EDKA) and 609 to 656 (PPPN…HLQN). Positions 639 to 656 (ESSEESKNLESPEKHLQN) are enriched in basic and acidic residues. Position 649 is a phosphoserine (Ser-649).

This sequence belongs to the Rab GDI family. Monomer. Heterotrimer composed of RABGGTA, RABGGTB and CHML; within this trimer, RABGGTA and RABGGTB form the catalytic component B, while CHML (component A) mediates Rab protein binding. Interacts with RAB1A, RAB7A and RAB27A, but has much lower affinity for RAB1A, RAB7A and RAB27A than CHM. Interacts with the non-phosphorylated forms of RAB3A, RAB3B, RAB3C, RAB3D, RAB5B, RAB5C, RAB8A, RAB8B, RAB10, RAB12, RAB35, and RAB43.

It localises to the cytoplasm. The protein resides in the cytosol. Substrate-binding subunit (component A) of the Rab geranylgeranyltransferase (GGTase) complex. Binds unprenylated Rab proteins and presents the substrate peptide to the catalytic component B. The component A is thought to be regenerated by transferring its prenylated Rab back to the donor membrane. Less effective than CHM in supporting prenylation of Rab3 family. This is Rab proteins geranylgeranyltransferase component A 2 (CHML) from Homo sapiens (Human).